The primary structure comprises 378 residues: Chaperone protein DnaJ (378 aa).

The J domain occupies Asp-6–Gly-70. The CR-type zinc finger occupies Gly-137–Lys-219. 8 residues coordinate Zn(2+): Cys-150, Cys-153, Cys-167, Cys-170, Cys-193, Cys-196, Cys-207, and Cys-210. CXXCXGXG motif repeat units lie at residues Cys-150–Gly-157, Cys-167–Gly-174, Cys-193–Gly-200, and Cys-207–Gly-214.

This sequence belongs to the DnaJ family. In terms of assembly, homodimer. Zn(2+) is required as a cofactor.

It is found in the cytoplasm. In terms of biological role, participates actively in the response to hyperosmotic and heat shock by preventing the aggregation of stress-denatured proteins and by disaggregating proteins, also in an autonomous, DnaK-independent fashion. Unfolded proteins bind initially to DnaJ; upon interaction with the DnaJ-bound protein, DnaK hydrolyzes its bound ATP, resulting in the formation of a stable complex. GrpE releases ADP from DnaK; ATP binding to DnaK triggers the release of the substrate protein, thus completing the reaction cycle. Several rounds of ATP-dependent interactions between DnaJ, DnaK and GrpE are required for fully efficient folding. Also involved, together with DnaK and GrpE, in the DNA replication of plasmids through activation of initiation proteins. The protein is Chaperone protein DnaJ of Lactobacillus delbrueckii subsp. bulgaricus (strain ATCC BAA-365 / Lb-18).